A 233-amino-acid polypeptide reads, in one-letter code: MINHLALNTPYFGILLSVIPFFLATILFEKTNRFFLFAPLFVSMVFGVAFLYLTGIPYKTYKIGGDIIYFFLEPATICFAIPLYKKREVLVKHWHRIIGGIGIGTVVALLIILTFAKLAQFANDVILSMLPQAATTAIALPVSAGIGGIKELTSLAVILNGVIIYALGNKFLKLFRITNPIARGLALGTSGHTLGVAPAKELGPVEESMASIALVLVGVVVVAVVPVFVAIFF.

The next 7 membrane-spanning stretches (helical) occupy residues 9 to 29 (TPYFGILLSVIPFFLATILFE), 34 to 54 (FFLFAPLFVSMVFGVAFLYLT), 63 to 83 (IGGDIIYFFLEPATICFAIPL), 97 to 117 (IIGGIGIGTVVALLIILTFAK), 121 to 141 (FANDVILSMLPQAATTAIALP), 144 to 164 (AGIGGIKELTSLAVILNGVII), and 212 to 232 (IALVLVGVVVVAVVPVFVAIF).

The protein belongs to the CidB/LrgB family. LrgB subfamily.

Its subcellular location is the cell membrane. Functionally, inhibits the expression or activity of extracellular murein hydrolases by interacting, possibly with LrgA, with the holin-like proteins CidA and/or CidB. The LrgAB and CidAB proteins may affect the proton motive force of the membrane. May be involved in programmed cell death (PCD), possibly triggering PCD in response to antibiotics and environmental stresses. In Staphylococcus aureus (strain Mu3 / ATCC 700698), this protein is Antiholin-like protein LrgB.